A 336-amino-acid chain; its full sequence is Pentalenene synthase (336 aa).

Aspartate 80, aspartate 84, asparagine 219, serine 223, and glutamate 227 together coordinate Mg(2+). Positions 80–84 (DDLFD) match the DDXXD motif motif.

The protein belongs to the terpene synthase family. As to quaternary structure, monomer. It depends on Mg(2+) as a cofactor.

It carries out the reaction (2E,6E)-farnesyl diphosphate = pentalenene + diphosphate. It functions in the pathway antibiotic biosynthesis; neopentalenolactone biosynthesis. Functionally, catalyzes the cyclization of farnesyl diphosphate (FPP) to the tricyclic sesquiterpene pentalenene in the biosynthesis of neopentalenolactone antibiotic. In Streptomyces avermitilis (strain ATCC 31267 / DSM 46492 / JCM 5070 / NBRC 14893 / NCIMB 12804 / NRRL 8165 / MA-4680), this protein is Pentalenene synthase (ptlA).